The chain runs to 131 residues: Small ribosomal subunit protein uS11 (131 aa).

Belongs to the universal ribosomal protein uS11 family. Part of the 30S ribosomal subunit. Interacts with proteins S7 and S18. Binds to IF-3.

Located on the platform of the 30S subunit, it bridges several disparate RNA helices of the 16S rRNA. Forms part of the Shine-Dalgarno cleft in the 70S ribosome. The chain is Small ribosomal subunit protein uS11 from Wolinella succinogenes (strain ATCC 29543 / DSM 1740 / CCUG 13145 / JCM 31913 / LMG 7466 / NCTC 11488 / FDC 602W) (Vibrio succinogenes).